A 147-amino-acid polypeptide reads, in one-letter code: DNA-directed RNA polymerase I subunit rpa14 (147 aa).

The segment at Val71–Ser147 is disordered. Positions Pro74–Glu84 are enriched in low complexity. Residues Leu87–Thr111 show a composition bias toward basic and acidic residues. The span at Lys112 to Arg124 shows a compositional bias: basic residues. Over residues Arg125–Ala135 the composition is skewed to basic and acidic residues.

Component of the RNA polymerase I (Pol I) complex consisting of 14 subunits. Part of a Pol I subcomplex consisting of the subunits A14 and A43. Interacts with rpa43. Post-translationally, phosphorylated.

The protein localises to the nucleus. Its subcellular location is the nucleolus. DNA-dependent RNA polymerase catalyzes the transcription of DNA into RNA using the four ribonucleoside triphosphates as substrates. Component of RNA polymerase I which synthesizes ribosomal RNA precursors. A14 seems to play a role in the stability of Pol I subunit A43 and association of rrn3 to Pol I. The protein is DNA-directed RNA polymerase I subunit rpa14 (ker1) of Schizosaccharomyces pombe (strain 972 / ATCC 24843) (Fission yeast).